The following is a 370-amino-acid chain: Protein SUPPRESSOR OF NIM1 1 (370 aa).

Residues 1–43 (MALPWELEEDILSRLPPISLVRFRTVSKHWNSLFNDKTFINNH) form the F-box domain.

As to expression, ubiquitous, at low levels.

In terms of biological role, negatively regulates a plant defense signaling pathway which is independent of salicylic acid (SA) and systemic acquired resistance (SAR). Confers sensitivity to P.syringae and P.parasitica. The sequence is that of Protein SUPPRESSOR OF NIM1 1 (SON1) from Arabidopsis thaliana (Mouse-ear cress).